The following is a 447-amino-acid chain: Dimethylsulfoniopropionate lyase DddP (447 aa).

The tract at residues 1–26 (MNRHFNATRKIDPSRGATLGDGSPND) is disordered. Asp295, Asp297, Asp307, His371, Glu406, and Glu421 together coordinate a divalent metal cation.

This sequence belongs to the peptidase M24B family. Homodimer. The cofactor is a divalent metal cation.

It catalyses the reaction S,S-dimethyl-beta-propiothetin = acrylate + dimethyl sulfide + H(+). In terms of biological role, able to cleave dimethylsulfoniopropionate (DMSP), releasing dimethyl sulfide (DMS). DMS is the principal form by which sulfur is transported from oceans to the atmosphere. The real activity of the protein is however subject to debate and it is unclear whether it constitutes a real dimethylsulfoniopropionate lyase in vivo: the low activity with DMSP as substrate suggests that DMSP is not its native substrate. In Roseobacter denitrificans (strain ATCC 33942 / OCh 114) (Erythrobacter sp. (strain OCh 114)), this protein is Dimethylsulfoniopropionate lyase DddP.